The following is a 365-amino-acid chain: Eukaryotic translation initiation factor 3 subunit H (365 aa).

The region spanning 15-166 (ILLDSLVVMK…IRAWRLSTAA (152 aa)) is the MPN domain. A disordered region spans residues 276-295 (KRQQENESRLARGDPPLPMD). Residues 277-287 (RQQENESRLAR) are compositionally biased toward basic and acidic residues.

Belongs to the eIF-3 subunit H family. In terms of assembly, component of the eukaryotic translation initiation factor 3 (eIF-3) complex.

The protein localises to the cytoplasm. In terms of biological role, component of the eukaryotic translation initiation factor 3 (eIF-3) complex, which is involved in protein synthesis of a specialized repertoire of mRNAs and, together with other initiation factors, stimulates binding of mRNA and methionyl-tRNAi to the 40S ribosome. The eIF-3 complex specifically targets and initiates translation of a subset of mRNAs involved in cell proliferation. The polypeptide is Eukaryotic translation initiation factor 3 subunit H (Caenorhabditis briggsae).